A 574-amino-acid polypeptide reads, in one-letter code: Proline--tRNA ligase (574 aa).

Belongs to the class-II aminoacyl-tRNA synthetase family. ProS type 1 subfamily. Homodimer.

The protein localises to the cytoplasm. It catalyses the reaction tRNA(Pro) + L-proline + ATP = L-prolyl-tRNA(Pro) + AMP + diphosphate. Its function is as follows. Catalyzes the attachment of proline to tRNA(Pro) in a two-step reaction: proline is first activated by ATP to form Pro-AMP and then transferred to the acceptor end of tRNA(Pro). As ProRS can inadvertently accommodate and process non-cognate amino acids such as alanine and cysteine, to avoid such errors it has two additional distinct editing activities against alanine. One activity is designated as 'pretransfer' editing and involves the tRNA(Pro)-independent hydrolysis of activated Ala-AMP. The other activity is designated 'posttransfer' editing and involves deacylation of mischarged Ala-tRNA(Pro). The misacylated Cys-tRNA(Pro) is not edited by ProRS. This is Proline--tRNA ligase from Nitratidesulfovibrio vulgaris (strain ATCC 29579 / DSM 644 / CCUG 34227 / NCIMB 8303 / VKM B-1760 / Hildenborough) (Desulfovibrio vulgaris).